We begin with the raw amino-acid sequence, 196 residues long: Imidazoleglycerol-phosphate dehydratase (196 aa).

The protein belongs to the imidazoleglycerol-phosphate dehydratase family.

The protein resides in the cytoplasm. It carries out the reaction D-erythro-1-(imidazol-4-yl)glycerol 3-phosphate = 3-(imidazol-4-yl)-2-oxopropyl phosphate + H2O. It functions in the pathway amino-acid biosynthesis; L-histidine biosynthesis; L-histidine from 5-phospho-alpha-D-ribose 1-diphosphate: step 6/9. The protein is Imidazoleglycerol-phosphate dehydratase of Caulobacter sp. (strain K31).